The sequence spans 283 residues: Protein-L-isoaspartate O-methyltransferase (283 aa).

The active site involves S122.

The protein belongs to the methyltransferase superfamily. L-isoaspartyl/D-aspartyl protein methyltransferase family.

The protein localises to the cytoplasm. It catalyses the reaction [protein]-L-isoaspartate + S-adenosyl-L-methionine = [protein]-L-isoaspartate alpha-methyl ester + S-adenosyl-L-homocysteine. Catalyzes the methyl esterification of L-isoaspartyl residues in peptides and proteins that result from spontaneous decomposition of normal L-aspartyl and L-asparaginyl residues. It plays a role in the repair and/or degradation of damaged proteins. The sequence is that of Protein-L-isoaspartate O-methyltransferase from Leptothrix cholodnii (strain ATCC 51168 / LMG 8142 / SP-6) (Leptothrix discophora (strain SP-6)).